The following is a 545-amino-acid chain: Chaperonin GroEL (545 aa).

ATP contacts are provided by residues 30-33 (TLGP), lysine 51, 87-91 (DGTTT), glycine 415, and aspartate 495.

Belongs to the chaperonin (HSP60) family. Forms a cylinder of 14 subunits composed of two heptameric rings stacked back-to-back. Interacts with the co-chaperonin GroES.

Its subcellular location is the cytoplasm. The catalysed reaction is ATP + H2O + a folded polypeptide = ADP + phosphate + an unfolded polypeptide.. Together with its co-chaperonin GroES, plays an essential role in assisting protein folding. The GroEL-GroES system forms a nano-cage that allows encapsulation of the non-native substrate proteins and provides a physical environment optimized to promote and accelerate protein folding. The polypeptide is Chaperonin GroEL (Shewanella sp. (strain MR-7)).